The chain runs to 111 residues: Heavy metal-associated isoprenylated plant protein 10 (111 aa).

An HMA domain is found at 1–68 (MQETVVFEWG…ICDYVDITAV (68 aa)). A disordered region spans residues 68–111 (VGPEGQPAQNRNPVKKPEPKVIRGRPYPPQKKTPGKNSDECIIL). Cys-108 is modified (cysteine methyl ester). A lipid anchor (S-farnesyl cysteine) is attached at Cys-108. The propeptide at 109–111 (IIL) is removed in mature form.

Belongs to the HIPP family.

Probable heavy-metal-binding protein. The polypeptide is Heavy metal-associated isoprenylated plant protein 10 (Arabidopsis thaliana (Mouse-ear cress)).